Reading from the N-terminus, the 420-residue chain is Gamma-glutamyl phosphate reductase (420 aa).

It belongs to the gamma-glutamyl phosphate reductase family.

The protein resides in the cytoplasm. The enzyme catalyses L-glutamate 5-semialdehyde + phosphate + NADP(+) = L-glutamyl 5-phosphate + NADPH + H(+). The protein operates within amino-acid biosynthesis; L-proline biosynthesis; L-glutamate 5-semialdehyde from L-glutamate: step 2/2. Its function is as follows. Catalyzes the NADPH-dependent reduction of L-glutamate 5-phosphate into L-glutamate 5-semialdehyde and phosphate. The product spontaneously undergoes cyclization to form 1-pyrroline-5-carboxylate. In Laribacter hongkongensis (strain HLHK9), this protein is Gamma-glutamyl phosphate reductase.